The chain runs to 145 residues: Probable thioredoxin-2 (145 aa).

The Thioredoxin domain maps to 39-144 (VFDIDSVEDF…LDDFIEDVLA (106 aa)). Residues Cys68 and Cys71 each act as nucleophile in the active site. Cys68 and Cys71 are oxidised to a cystine.

Belongs to the thioredoxin family.

In terms of biological role, participates in various redox reactions through the reversible oxidation of its active center dithiol to a disulfide and catalyzes dithiol-disulfide exchange reactions. This chain is Probable thioredoxin-2 (trx-2), found in Caenorhabditis elegans.